Consider the following 590-residue polypeptide: Aspartate--tRNA(Asp/Asn) ligase (590 aa).

Glu173 contacts L-aspartate. Residues 197 to 200 (QIFK) form an aspartate region. Arg219 is a binding site for L-aspartate. ATP is bound by residues 219–221 (RDE) and Gln228. Residue His450 coordinates L-aspartate. Glu484 lines the ATP pocket. Residue Arg491 participates in L-aspartate binding. 536–539 (GLDR) provides a ligand contact to ATP.

Belongs to the class-II aminoacyl-tRNA synthetase family. Type 1 subfamily. As to quaternary structure, homodimer.

Its subcellular location is the cytoplasm. It catalyses the reaction tRNA(Asx) + L-aspartate + ATP = L-aspartyl-tRNA(Asx) + AMP + diphosphate. Functionally, aspartyl-tRNA synthetase with relaxed tRNA specificity since it is able to aspartylate not only its cognate tRNA(Asp) but also tRNA(Asn). Reaction proceeds in two steps: L-aspartate is first activated by ATP to form Asp-AMP and then transferred to the acceptor end of tRNA(Asp/Asn). This Coxiella burnetii (strain RSA 331 / Henzerling II) protein is Aspartate--tRNA(Asp/Asn) ligase.